A 582-amino-acid chain; its full sequence is Proline--tRNA ligase (582 aa).

The protein belongs to the class-II aminoacyl-tRNA synthetase family. ProS type 1 subfamily. As to quaternary structure, homodimer.

It localises to the cytoplasm. The enzyme catalyses tRNA(Pro) + L-proline + ATP = L-prolyl-tRNA(Pro) + AMP + diphosphate. Its function is as follows. Catalyzes the attachment of proline to tRNA(Pro) in a two-step reaction: proline is first activated by ATP to form Pro-AMP and then transferred to the acceptor end of tRNA(Pro). As ProRS can inadvertently accommodate and process non-cognate amino acids such as alanine and cysteine, to avoid such errors it has two additional distinct editing activities against alanine. One activity is designated as 'pretransfer' editing and involves the tRNA(Pro)-independent hydrolysis of activated Ala-AMP. The other activity is designated 'posttransfer' editing and involves deacylation of mischarged Ala-tRNA(Pro). The misacylated Cys-tRNA(Pro) is not edited by ProRS. The polypeptide is Proline--tRNA ligase (Mycobacterium bovis (strain ATCC BAA-935 / AF2122/97)).